The primary structure comprises 394 residues: NADH dehydrogenase [ubiquinone] iron-sulfur protein 2 (394 aa).

The span at 1–16 shows a compositional bias: polar residues; it reads MTTKNRQIKNFTSNFG. The tract at residues 1-22 is disordered; it reads MTTKNRQIKNFTSNFGPQHPAA.

The protein belongs to the complex I 49 kDa subunit family. Complex I is composed of about 45 different subunits. This is a component of the iron-sulfur (IP) fragment of the enzyme.

The protein localises to the mitochondrion. The enzyme catalyses a ubiquinone + NADH + 5 H(+)(in) = a ubiquinol + NAD(+) + 4 H(+)(out). Functionally, core subunit of the mitochondrial membrane respiratory chain NADH dehydrogenase (Complex I) that is believed to belong to the minimal assembly required for catalysis. Complex I functions in the transfer of electrons from NADH to the respiratory chain. The immediate electron acceptor for the enzyme is believed to be ubiquinone. Component of the iron-sulfur (IP) fragment of the enzyme. This is NADH dehydrogenase [ubiquinone] iron-sulfur protein 2 (NAD7) from Nicotiana sylvestris (Wood tobacco).